The primary structure comprises 330 residues: MITMDLMSGYGRVDEQVAIQEAAAAGLRGMEHLILQLSQTGTSERSPAPAPAQEQQQQQQVDCREITDMTVSKFKKVISMLNRTGHARFRRGPVVAQSSGPAASEPAPVRSSPSAVSRPMTLDFTKAASGYGKDAGFSVSGISAASSSFLSSVTGDGSVSNGRGGGSSSLMLPPPPATSCGKPPLSSAAAAMSAGVGHKRKCHDHAHSENIAGGKYGSTGGRCHCSKRRKHRVKRTIRVPAISSKVADIPADDFSWRKYGQKPIKGSPFPRGYYKCSTLRGCPARKHVERDPADPSMLIVTYEGEHRHTPSAAGQDHPPAPPPPLALPLA.

A disordered region spans residues 39–61 (QTGTSERSPAPAPAQEQQQQQQV). Residues 51-60 (PAQEQQQQQQ) show a composition bias toward low complexity. The Nuclear localization signal signature appears at 74 to 81 (FKKVISML). Disordered stretches follow at residues 91-117 (RGPV…SAVS) and 302-330 (YEGE…LPLA). A compositionally biased stretch (low complexity) spans 101 to 117 (PAASEPAPVRSSPSAVS). Residues 245–311 (KVADIPADDF…YEGEHRHTPS (67 aa)) constitute a DNA-binding region (WRKY). Pro residues predominate over residues 318–330 (PPAPPPPLALPLA).

The protein belongs to the WRKY group II-a family. In terms of tissue distribution, highly expressed in aleurone cells. In seeds, predominantly present in the plumule, radicle and scutellum of the embryo.

The protein localises to the nucleus. In terms of biological role, transcription factor. Interacts, when in complex with WRKY71, specifically with the W box (5'-(T)TGAC[CT]-3'), a frequently occurring elicitor-responsive cis-acting element. Represses specifically gibberellic acid (GA)-induced promoters in aleurone cells, probably by interfering with GAM1. This is WRKY transcription factor WRKY51 from Oryza sativa subsp. indica (Rice).